We begin with the raw amino-acid sequence, 192 residues long: Interleukin-18 (192 aa).

A propeptide spanning residues 1–35 is cleaved from the precursor; it reads MAAMSEDSCVNFKEMMFIDNTLYFIPEENGDLESD.

It belongs to the IL-1 family. As to quaternary structure, forms a ternary complex with ligand-binding receptor subunit IL18R1 and signaling receptor subunit IL18RAP at the plasma membrane. Mature IL18 first binds to IL18R1 forming a low affinity binary complex, which then interacts with IL18RAP to form a high affinity ternary complex that signals inside the cell. Interacts with cargo receptor TMED10; the interaction mediates the translocation from the cytoplasm into the ERGIC (endoplasmic reticulum-Golgi intermediate compartment) and thereby secretion. In terms of processing, the pro-IL-18 precursor is processed by CASP1 to yield its mature, active form. The pro-IL-18 precursor is however not processed by Casp4/Casp11 in rodents. The pro-IL-18 precursor features autoinhibitory interactions between the propeptide and the post-cleavage-site region, preventing recognition by the IL18R1 receptor. Processing by CASP1 induces conformational changes to generate critical receptor-binding sites. The mature form is then secreted and released in the extracellular milieu by passing through the gasdermin-D (GSDMD) pore. In contrast, cleavage by CASP3 inactivates IL18.

The protein resides in the cytoplasm. The protein localises to the secreted. Pro-inflammatory cytokine primarily involved in epithelial barrier repair, polarized T-helper 1 (Th1) cell and natural killer (NK) cell immune responses. Upon binding to IL18R1 and IL18RAP, forms a signaling ternary complex which activates NF-kappa-B, triggering synthesis of inflammatory mediators. Synergizes with IL12/interleukin-12 to induce IFNG synthesis from T-helper 1 (Th1) cells and natural killer (NK) cells. Involved in transduction of inflammation downstream of pyroptosis: its mature form is specifically released in the extracellular milieu by passing through the gasdermin-D (GSDMD) pore. This Mus musculus (Mouse) protein is Interleukin-18.